Reading from the N-terminus, the 107-residue chain is Ferredoxin 1 (107 aa).

4Fe-4S ferredoxin-type domains are found at residues 2 to 30 (TFVV…YEGP) and 31 to 60 (NFLV…SEDE). 2 residues coordinate [3Fe-4S] cluster: C9 and C17. The [4Fe-4S] cluster site is built by C21, C40, C43, and C46. Residue C50 coordinates [3Fe-4S] cluster.

The cofactor is [4Fe-4S] cluster. It depends on [3Fe-4S] cluster as a cofactor.

Ferredoxins are iron-sulfur proteins that transfer electrons in a wide variety of metabolic reactions. The sequence is that of Ferredoxin 1 (fdxA) from Pseudomonas aeruginosa (strain ATCC 15692 / DSM 22644 / CIP 104116 / JCM 14847 / LMG 12228 / 1C / PRS 101 / PAO1).